The following is a 57-amino-acid chain: Cold shock protein CspB (57 aa).

The CSD domain maps to 1–57 (IKWFNSEKGFGFIEVEGQDDVFVHFSAIQGEGFKCLEEGQAVSFEIVEGNRGPQAAN).

In terms of assembly, homodimer.

Its subcellular location is the cytoplasm. Its function is as follows. Affects cell viability at low temperatures. The protein is Cold shock protein CspB (cspB) of Sporosarcina globispora (Bacillus globisporus).